The sequence spans 66 residues: Large ribosomal subunit protein bL33c (66 aa).

This sequence belongs to the bacterial ribosomal protein bL33 family.

It localises to the plastid. It is found in the chloroplast. The polypeptide is Large ribosomal subunit protein bL33c (Brachypodium distachyon (Purple false brome)).